Consider the following 428-residue polypeptide: Tyrosine--tRNA ligase (428 aa).

L-tyrosine is bound at residue Tyr41. The 'HIGH' region signature appears at 46 to 55 (PTADSLHLGH). Residues Tyr179 and Gln183 each contribute to the L-tyrosine site. A 'KMSKS' region motif is present at residues 239–243 (KFGKT). Residue Lys242 participates in ATP binding. Residues 361–418 (ADLMQALVDSELQPSRGQARKTIASNAVTINGEKQSDPEYFFQDSDILFGRYTLLRRG) enclose the S4 RNA-binding domain.

This sequence belongs to the class-I aminoacyl-tRNA synthetase family. TyrS type 1 subfamily. As to quaternary structure, homodimer.

It localises to the cytoplasm. It carries out the reaction tRNA(Tyr) + L-tyrosine + ATP = L-tyrosyl-tRNA(Tyr) + AMP + diphosphate + H(+). Catalyzes the attachment of tyrosine to tRNA(Tyr) in a two-step reaction: tyrosine is first activated by ATP to form Tyr-AMP and then transferred to the acceptor end of tRNA(Tyr). The chain is Tyrosine--tRNA ligase from Citrobacter koseri (strain ATCC BAA-895 / CDC 4225-83 / SGSC4696).